A 421-amino-acid chain; its full sequence is AVAAESSTGTWTTVWTDGLTSLDRYKGRCYHIEPVAGEDNQWICYVAYPLDLFEEGSVTNMFTSIVGNVFGFKALRALRLEDLRIPPTYSKTFQGPPHGIQVERDKLNKYGRPLLGCTIKPKLGLSAKNYGRACYECLRGGLDFTKDDENVNSQPFMRWRDRFVFCAEAIYKSQAETGEIKGHYLNATAGTCEEMIKRAVFARELGVPIVMHDYLTGGFTANTTLRHYCRDNGLLLHIHRAMHAVIDRQKNHGMHFRVLAKALRMSGGDHIHSGTVVGKLEGEREMTLGFVDLLRDDFIEKDRARGIFFTQDWVSMPGVIPVASGGIHVWHMPALTEIFGDDSVLQFGGGTLGHPWGNAPGQAANRVALEACVQARNEGRDLAREGNEIIRAACKWSPELAAACEVWKAIKFEFEPVDTID.

2 residues coordinate substrate: asparagine 68 and threonine 118. Lysine 120 acts as the Proton acceptor in catalysis. Position 122 (lysine 122) interacts with substrate. The Mg(2+) site is built by lysine 146, aspartate 148, and glutamate 149. Lysine 146 carries the post-translational modification N6-carboxylysine. Residue histidine 239 is the Proton acceptor of the active site. Substrate contacts are provided by arginine 240, histidine 272, and serine 324.

It belongs to the RuBisCO large chain family. Type I subfamily. As to quaternary structure, heterohexadecamer of 8 large chains and 8 small chains; disulfide-linked. The disulfide link is formed within the large subunit homodimers. Requires Mg(2+) as cofactor. In terms of processing, the disulfide bond which can form in the large chain dimeric partners within the hexadecamer appears to be associated with oxidative stress and protein turnover.

The protein resides in the plastid. The protein localises to the chloroplast. It carries out the reaction 2 (2R)-3-phosphoglycerate + 2 H(+) = D-ribulose 1,5-bisphosphate + CO2 + H2O. The enzyme catalyses D-ribulose 1,5-bisphosphate + O2 = 2-phosphoglycolate + (2R)-3-phosphoglycerate + 2 H(+). RuBisCO catalyzes two reactions: the carboxylation of D-ribulose 1,5-bisphosphate, the primary event in carbon dioxide fixation, as well as the oxidative fragmentation of the pentose substrate in the photorespiration process. Both reactions occur simultaneously and in competition at the same active site. In Aegilops tauschii (Tausch's goatgrass), this protein is Ribulose bisphosphate carboxylase large chain (rbcL).